The primary structure comprises 720 residues: Glycine--tRNA ligase beta subunit (720 aa).

The protein belongs to the class-II aminoacyl-tRNA synthetase family. Tetramer of two alpha and two beta subunits.

Its subcellular location is the cytoplasm. The enzyme catalyses tRNA(Gly) + glycine + ATP = glycyl-tRNA(Gly) + AMP + diphosphate. The polypeptide is Glycine--tRNA ligase beta subunit (Acidovorax ebreus (strain TPSY) (Diaphorobacter sp. (strain TPSY))).